The sequence spans 217 residues: Lipid A acyltransferase PagP (217 aa).

A signal peptide spans Met1–Ala24. Catalysis depends on residues His89, Asp132, and Ser133.

The protein belongs to the lipid A palmitoyltransferase family. In terms of assembly, homodimer.

It is found in the cell outer membrane. It carries out the reaction a lipid A + a 1,2-diacyl-sn-glycero-3-phosphocholine = a hepta-acyl lipid A + a 2-acyl-sn-glycero-3-phosphocholine. The catalysed reaction is a lipid IVA + a 1,2-diacyl-sn-glycero-3-phosphocholine = a lipid IVB + a 2-acyl-sn-glycero-3-phosphocholine. It catalyses the reaction a lipid IIA + a 1,2-diacyl-sn-glycero-3-phosphocholine = a lipid IIB + a 2-acyl-sn-glycero-3-phosphocholine. Functionally, transfers a fatty acid residue from the sn-1 position of a phospholipid to the N-linked hydroxyfatty acid chain on the proximal unit of lipid A or its precursors. This is Lipid A acyltransferase PagP from Pectobacterium atrosepticum (strain SCRI 1043 / ATCC BAA-672) (Erwinia carotovora subsp. atroseptica).